Reading from the N-terminus, the 139-residue chain is Large ribosomal subunit protein uL16 (139 aa).

A compositionally biased stretch (basic residues) spans 1–16; it reads MLIPKRTKYRKQHRPD. The tract at residues 1 to 23 is disordered; the sequence is MLIPKRTKYRKQHRPDRHGMSKG.

This sequence belongs to the universal ribosomal protein uL16 family. Part of the 50S ribosomal subunit.

In terms of biological role, binds 23S rRNA and is also seen to make contacts with the A and possibly P site tRNAs. The polypeptide is Large ribosomal subunit protein uL16 (Bifidobacterium animalis subsp. lactis (strain AD011)).